The chain runs to 735 residues: MGSENSALKSYTLRESPFTLPSGLAVYPAILQDGKCASVFVYKRENEDKVNKAAKHLKTLRHPCLLRFLSCTVEADGIHLVTERVQPLEVALETLSPAEVCAGIYDILLALIFLHDRGHLTHNNVCLSSVFVSEDGHWKLGGMETVCQVPQATPEFLRNIQSVRDPASIPPEEMSPEFSGLPESHGHARDAYAFGALVDSLLPIFNEQVSADVLSSFLQILHSALLNPMPECRPALSTLLSHDFFRNDFLEVVNFLKSLTLKSEDEKTEFFKFLLDRVSCLSEELIASRLVPLLLNQLVFAEPVAVKSFLPYLLGPKKENAPGETPCLLSPALFQSRVIPVLLRLFEVHEEHVRMVLLSHIEAYVEHFTQEQLKKVILPQVLLGLRDTSNSIVAITLRSLAVLVSLLGPEVVVGGERTKIFKRTAPSFTKTSDLSPEGSPMHVVCSQQSRVSKVLEDPSSNVFPKWLSGNVPSSSRKRIQEECYSSLSQTGDQFSHTIKFPMNGLSDVKNTSEDNGSFPAGSNKPEEWPDWSEPEEPEQQPASIHRWPREPCDVAESQHTNLTAEEVTWDDGEASFGTEINSTATASAPVPVTSGGQSTSAALVPLTEESKPLQSSPSSKTSHRQHEEVKPPQVSQERPLKAPSGLGLGEEFTIQVKKKPVQDPELDWFADMIPEIKPSGTFLILPELRTEVMVPDKDNVSSLMQFSSKFAATEMTEGEAEGWEGEELAWEDNNW.

The N-myristoyl glycine moiety is linked to residue Gly-2. Residues 2 to 245 enclose the Protein kinase domain; that stretch reads GSENSALKSY…LSTLLSHDFF (244 aa). HEAT repeat units lie at residues 194-249, 285-323, 333-370, and 372-409; these read FGAL…RNDF, LIAS…NAPG, LFQS…HFTQ, and QLKK…LLGP. A Phosphoserine modification is found at Ser-439. 2 disordered regions span residues 505 to 545 and 604 to 648; these read LSDV…ASIH and VPLT…GLGL. Over residues 528-538 the composition is skewed to acidic residues; the sequence is WPDWSEPEEPE. Residues 547–735 are interaction with EZR; the sequence is WPREPCDVAE…EELAWEDNNW (189 aa). Residue Ser-701 is modified to Phosphoserine.

This sequence belongs to the protein kinase superfamily. In terms of assembly, interacts with EZR/VIL2 C-terminal domain. Post-translationally, may be myristoylated; myristoylation may target it to Golgi compartment.

The protein localises to the cytoplasm. The protein resides in the golgi apparatus. It is found in the cell projection. Its subcellular location is the lamellipodium. May play a role in regulating cell adhesion/migration complexes in migrating cells. This Mus musculus (Mouse) protein is Protein-associating with the carboxyl-terminal domain of ezrin (Scyl3).